Here is a 370-residue protein sequence, read N- to C-terminus: tRNA-specific 2-thiouridylase MnmA (370 aa).

ATP-binding positions include 11-18 and Met37; that span reads AMSGGVDS. The interval 99 to 101 is interaction with target base in tRNA; the sequence is NPD. Cys104 acts as the Nucleophile in catalysis. Residues Cys104 and Cys201 are joined by a disulfide bond. Gly129 lines the ATP pocket. Positions 151 to 153 are interaction with tRNA; it reads KDQ. Cys201 (cysteine persulfide intermediate) is an active-site residue. Positions 313–314 are interaction with tRNA; sequence RY.

The protein belongs to the MnmA/TRMU family. In terms of assembly, interacts with TusE.

The protein localises to the cytoplasm. The enzyme catalyses S-sulfanyl-L-cysteinyl-[protein] + uridine(34) in tRNA + AH2 + ATP = 2-thiouridine(34) in tRNA + L-cysteinyl-[protein] + A + AMP + diphosphate + H(+). Functionally, catalyzes the 2-thiolation of uridine at the wobble position (U34) of tRNA(Lys), tRNA(Glu) and tRNA(Gln), leading to the formation of s(2)U34, the first step of tRNA-mnm(5)s(2)U34 synthesis. Sulfur is provided by IscS, via a sulfur-relay system. Binds ATP and its substrate tRNAs. This chain is tRNA-specific 2-thiouridylase MnmA, found in Buchnera aphidicola subsp. Baizongia pistaciae (strain Bp).